A 297-amino-acid polypeptide reads, in one-letter code: HTH-type transcriptional regulator ArgP (297 aa).

In terms of domain architecture, HTH lysR-type spans 4-60 (PDYRTLQALDAVIRERGFERAAQKLCITQSAVSQRIKQLENLFGQPLLVRTIPPRPT). The H-T-H motif DNA-binding region spans 21 to 40 (FERAAQKLCITQSAVSQRIK).

It belongs to the LysR transcriptional regulatory family. In terms of assembly, homodimer.

Controls the transcription of genes involved in arginine and lysine metabolism. The sequence is that of HTH-type transcriptional regulator ArgP from Pectobacterium atrosepticum (strain SCRI 1043 / ATCC BAA-672) (Erwinia carotovora subsp. atroseptica).